Consider the following 101-residue polypeptide: Small ribosomal subunit protein bS18c (101 aa).

Residues 1 to 19 (MDKSKQLFRKSKRSFRRRL) are compositionally biased toward basic residues. The segment at 1-23 (MDKSKQLFRKSKRSFRRRLPPIG) is disordered.

It belongs to the bacterial ribosomal protein bS18 family. As to quaternary structure, part of the 30S ribosomal subunit.

It is found in the plastid. Its subcellular location is the chloroplast. The polypeptide is Small ribosomal subunit protein bS18c (Acorus calamus (Sweet flag)).